Reading from the N-terminus, the 624-residue chain is Chaperone protein HtpG (624 aa).

The tract at residues 1–336 (MKGQETRGFQ…SSDLPLNVSR (336 aa)) is a; substrate-binding. Positions 337 to 552 (EILQDSTVTR…ADEMSTQMAK (216 aa)) are b. Residues 553–624 (LFAAAGQKVP…IRRMNQLLVS (72 aa)) are c.

This sequence belongs to the heat shock protein 90 family. As to quaternary structure, homodimer.

It is found in the cytoplasm. Molecular chaperone. Has ATPase activity. In Shigella boydii serotype 4 (strain Sb227), this protein is Chaperone protein HtpG.